We begin with the raw amino-acid sequence, 363 residues long: tRNA N6-adenosine threonylcarbamoyltransferase (363 aa).

Fe cation-binding residues include His121 and His125. Substrate-binding positions include 143–147 (LASGG), Asp176, Gly189, and Asn287. Asp315 is a binding site for Fe cation.

It belongs to the KAE1 / TsaD family. It depends on Fe(2+) as a cofactor.

It is found in the cytoplasm. It catalyses the reaction L-threonylcarbamoyladenylate + adenosine(37) in tRNA = N(6)-L-threonylcarbamoyladenosine(37) in tRNA + AMP + H(+). In terms of biological role, required for the formation of a threonylcarbamoyl group on adenosine at position 37 (t(6)A37) in tRNAs that read codons beginning with adenine. Is involved in the transfer of the threonylcarbamoyl moiety of threonylcarbamoyl-AMP (TC-AMP) to the N6 group of A37, together with TsaE and TsaB. TsaD likely plays a direct catalytic role in this reaction. The protein is tRNA N6-adenosine threonylcarbamoyltransferase of Rhodopseudomonas palustris (strain BisA53).